The chain runs to 331 residues: Glycerophosphodiester phosphodiesterase 1 (331 aa).

At 1–3 (MWL) the chain is on the cytoplasmic side. A helical membrane pass occupies residues 4-24 (WEDQGGLLGPFSFVLVLLLVV). At 25–248 (TRSPFNACVL…PRYSVFWKQS (224 aa)) the chain is on the lumenal side. The GP-PDE domain maps to 65 to 331 (VSAIAHRGGS…SMLEDCAPHF (267 aa)). The Mg(2+) site is built by Glu-97 and Asp-99. N-linked (GlcNAc...) asparagine glycosylation occurs at Asn-168. Residue Asp-174 coordinates Mg(2+). The chain crosses the membrane as a helical span at residues 249 to 269 (VFVVLDILLDWSMHNVLWYLC). The Cytoplasmic portion of the chain corresponds to 270–331 (GISAFLMQKD…SMLEDCAPHF (62 aa)).

It belongs to the glycerophosphoryl diester phosphodiesterase family. As to quaternary structure, interacts with PRAF2. Interacts with RGS16. Mg(2+) is required as a cofactor. Post-translationally, N-glycosylated. In terms of tissue distribution, widely expressed. Highly expressed in the brain and spinal cord, followed by kidney, liver, and testis. In contrast, little or no expression is detected in the heart or spleen.

It is found in the cell membrane. Its subcellular location is the cytoplasmic vesicle membrane. The catalysed reaction is sn-glycero-3-phospho-1D-myo-inositol + H2O = myo-inositol + sn-glycerol 3-phosphate + H(+). The enzyme catalyses 1-O-(1Z-octadecenyl)-sn-glycero-3-phospho-(N-5Z,8Z,11Z,14Z-eicosatetraenoyl)-ethanolamine + H2O = 1-O-(1Z-octadecenyl)-sn-glycero-3-phosphate + N-(5Z,8Z,11Z,14Z-eicosatetraenoyl)-ethanolamine + H(+). It carries out the reaction 1-O-(1Z-octadecenyl)-sn-glycero-3-phospho-(N-9Z-octadecenoyl)-ethanolamine + H2O = 1-O-(1Z-octadecenyl)-sn-glycero-3-phosphate + N-(9Z-octadecenoyl) ethanolamine + H(+). It catalyses the reaction 1-O-(1Z-octadecenyl)-sn-glycero-3-phospho-N-hexadecanoyl-ethanolamine + H2O = 1-O-(1Z-octadecenyl)-sn-glycero-3-phosphate + N-hexadecanoylethanolamine + H(+). The catalysed reaction is N-(4Z,7Z,10Z,13Z,16Z,19Z)-docosahexaenoyl-sn-glycero-3-phosphoethanolamine + H2O = N-(4Z,7Z,10Z,13Z,16Z,19Z)-docosahexaenoyl ethanolamine + sn-glycerol 3-phosphate + H(+). The enzyme catalyses N-eicosanoyl-sn-glycero-3-phosphoethanolamine + H2O = N-eicosanoyl ethanolamine + sn-glycerol 3-phosphate + H(+). It carries out the reaction N-hexadecanoyl-sn-glycero-3-phosphoethanolamine + H2O = N-hexadecanoylethanolamine + sn-glycerol 3-phosphate + H(+). It catalyses the reaction N-(9Z-octadecenoyl)-sn-glycero-3-phosphoethanolamine + H2O = N-(9Z-octadecenoyl) ethanolamine + sn-glycerol 3-phosphate + H(+). The catalysed reaction is N-(5Z,8Z,11Z,14Z-eicosatetraenoyl)-sn-glycero-3-phosphoethanolamine + H2O = N-(5Z,8Z,11Z,14Z-eicosatetraenoyl)-ethanolamine + sn-glycerol 3-phosphate + H(+). With respect to regulation, inhibited by EDTA, calcium chloride, and zinc chloride. Enhanced by magnesium chloride. Glycerophosphodiester phosphodiesterase activity can be modulated by G-protein signaling pathways. Hydrolyzes the phosphodiester bond of glycerophosphodiesters such as glycerophosphoinositol (GroPIns) and glycerophosphoethanolamine (GroPEth), to yield a glycerol phosphate and an alcohol. Hydrolyzes glycerophospho-N-acylethanolamines to N-acylethanolamines in the brain and participates in bioactive N-acylethanolamine biosynthesis such as anandamide (an endocannabinoid), N-palmitoylethanolamine (an anti-inflammatory), and N-oleoylethanolamine (an anorexic). In addition, has a lysophospholipase D activity by hydrolyzing N-acyl-lysoplasmenylethanolamine (N-acyl-lysoPlsEt) to N-acylethanolamine. However lysophospholipase D activity is lower than glycerophosphodiester phosphodiesterase activity. Has little or no activity towards glycerophosphocholine. The polypeptide is Glycerophosphodiester phosphodiesterase 1 (Mus musculus (Mouse)).